Reading from the N-terminus, the 419-residue chain is Pyrrolysine--tRNA ligase (419 aa).

Residues 100–157 (APKVKKAMPKSVSRAPKPLENSVSAKASTNTSRSVPSPAKSTPNSSVPASAPAPSLTR) form a disordered region. Residues 120 to 141 (NSVSAKASTNTSRSVPSPAKST) are compositionally biased toward polar residues. The span at 142 to 154 (PNSSVPASAPAPS) shows a compositional bias: low complexity.

This sequence belongs to the class-II aminoacyl-tRNA synthetase family.

It localises to the cytoplasm. The enzyme catalyses tRNA(Pyl) + L-pyrrolysine + ATP = L-pyrrolysyl-tRNA(Pyl) + AMP + diphosphate. Its function is as follows. Catalyzes the attachment of pyrrolysine to tRNA(Pyl). Pyrrolysine is a lysine derivative encoded by the termination codon UAG. This Methanosarcina barkeri protein is Pyrrolysine--tRNA ligase (pylS).